The primary structure comprises 280 residues: MTEEKKENQKIVNLIIISDSVGDTAFNMVQAGAVQYPDVKFNYRRYPFITNREKLEKVFNEITEFENVLIAFTLIHEDEQLAAIKFAREHNMKYVDLLSGVIENIHSLTGEEPKHEIGAVHHMGQNYFDRISAMEFAVMYDDGKDPKGFLEADVVLLGVSRTSKTPLSLFLANKNLKVANLPLVPQTHIPDEIYKVDPKKIIGLTNDPSVLNEIRRQRMIAYGLNPDTTYSNMDSINAELDAANKLYKKLGCYVINVAHRSIEETAALIMEHLGIDDYAK.

158-165 (GVSRTSKT) lines the ADP pocket.

This sequence belongs to the pyruvate, phosphate/water dikinase regulatory protein family. PDRP subfamily.

The enzyme catalyses N(tele)-phospho-L-histidyl/L-threonyl-[pyruvate, phosphate dikinase] + ADP = N(tele)-phospho-L-histidyl/O-phospho-L-threonyl-[pyruvate, phosphate dikinase] + AMP + H(+). It carries out the reaction N(tele)-phospho-L-histidyl/O-phospho-L-threonyl-[pyruvate, phosphate dikinase] + phosphate + H(+) = N(tele)-phospho-L-histidyl/L-threonyl-[pyruvate, phosphate dikinase] + diphosphate. Functionally, bifunctional serine/threonine kinase and phosphorylase involved in the regulation of the pyruvate, phosphate dikinase (PPDK) by catalyzing its phosphorylation/dephosphorylation. The sequence is that of Putative pyruvate, phosphate dikinase regulatory protein from Lactobacillus gasseri (strain ATCC 33323 / DSM 20243 / BCRC 14619 / CIP 102991 / JCM 1131 / KCTC 3163 / NCIMB 11718 / NCTC 13722 / AM63).